The primary structure comprises 100 residues: Urease subunit gamma (100 aa).

This sequence belongs to the urease gamma subunit family. As to quaternary structure, heterotrimer of UreA (gamma), UreB (beta) and UreC (alpha) subunits. Three heterotrimers associate to form the active enzyme.

The protein localises to the cytoplasm. The catalysed reaction is urea + 2 H2O + H(+) = hydrogencarbonate + 2 NH4(+). Its pathway is nitrogen metabolism; urea degradation; CO(2) and NH(3) from urea (urease route): step 1/1. This is Urease subunit gamma from Cupriavidus necator (strain ATCC 17699 / DSM 428 / KCTC 22496 / NCIMB 10442 / H16 / Stanier 337) (Ralstonia eutropha).